Here is a 412-residue protein sequence, read N- to C-terminus: Acetate kinase (412 aa).

Asn10 serves as a coordination point for Mg(2+). ATP is bound at residue Lys17. The segment at 40-61 (ETSRLAHTPSAGGGAEPRERTG) is disordered. Residue Arg95 coordinates substrate. Asp152 functions as the Proton donor/acceptor in the catalytic mechanism. Residues 212–216 (HLGNG), 286–288 (DMR), and 334–338 (GVGEN) each bind ATP. Glu388 provides a ligand contact to Mg(2+).

This sequence belongs to the acetokinase family. As to quaternary structure, homodimer. Mg(2+) is required as a cofactor. The cofactor is Mn(2+).

The protein resides in the cytoplasm. The catalysed reaction is acetate + ATP = acetyl phosphate + ADP. It functions in the pathway metabolic intermediate biosynthesis; acetyl-CoA biosynthesis; acetyl-CoA from acetate: step 1/2. Its function is as follows. Catalyzes the formation of acetyl phosphate from acetate and ATP. Can also catalyze the reverse reaction. This Streptomyces griseus subsp. griseus (strain JCM 4626 / CBS 651.72 / NBRC 13350 / KCC S-0626 / ISP 5235) protein is Acetate kinase.